Consider the following 414-residue polypeptide: Tyrosine--tRNA ligase (414 aa).

Tyrosine 38 lines the L-tyrosine pocket. The short motif at 43–52 (CTARSLHIGS) is the 'HIGH' region element. L-tyrosine contacts are provided by tyrosine 172 and glutamine 176. A 'KMSKS' region motif is present at residues 232–236 (KMGKT). Residue lysine 235 coordinates ATP. An S4 RNA-binding domain is found at 345-412 (ISVAKLLQLA…GKKRRIKVVV (68 aa)).

The protein belongs to the class-I aminoacyl-tRNA synthetase family. TyrS type 1 subfamily. In terms of assembly, homodimer.

It localises to the cytoplasm. It carries out the reaction tRNA(Tyr) + L-tyrosine + ATP = L-tyrosyl-tRNA(Tyr) + AMP + diphosphate + H(+). Functionally, catalyzes the attachment of tyrosine to tRNA(Tyr) in a two-step reaction: tyrosine is first activated by ATP to form Tyr-AMP and then transferred to the acceptor end of tRNA(Tyr). The protein is Tyrosine--tRNA ligase of Anaplasma marginale (strain St. Maries).